Consider the following 220-residue polypeptide: Thymidylate kinase (220 aa).

10 to 17 lines the ATP pocket; the sequence is GIDGCGKS.

Belongs to the thymidylate kinase family.

The enzyme catalyses dTMP + ATP = dTDP + ADP. In terms of biological role, phosphorylation of dTMP to form dTDP in both de novo and salvage pathways of dTTP synthesis. In Prochlorococcus marinus (strain SARG / CCMP1375 / SS120), this protein is Thymidylate kinase.